We begin with the raw amino-acid sequence, 636 residues long: uncharacterized protein (636 aa).

2 disordered regions span residues 1–22 and 81–107; these read MYNVRGDLNRKTPSDGNVNEIG and SSQTYNRYPNGGNSAGSDMYSTSPQNN. At 1-170 the chain is on the cytoplasmic side; it reads MYNVRGDLNR…YFVGGEGLMQ (170 aa). Residues 171 to 191 traverse the membrane as a helical; Signal-anchor for type II membrane protein segment; the sequence is LLFLLFLAAGTGMLFIGLPIL. Over 192–636 the chain is Lumenal; it reads TYTGHNSLAS…RPKNSLMDGC (445 aa). The GH16 domain occupies 218–587; the sequence is LRYGSLIDPD…YVRIYQDSSD (370 aa). Residues asparagine 291, asparagine 378, asparagine 429, asparagine 464, asparagine 489, and asparagine 616 are each glycosylated (N-linked (GlcNAc...) asparagine).

It belongs to the SKN1/KRE6 family.

It is found in the endoplasmic reticulum membrane. Its function is as follows. Required for synthesis of the major beta-glucans of the yeast cell wall. This is an uncharacterized protein from Schizosaccharomyces pombe (strain 972 / ATCC 24843) (Fission yeast).